Reading from the N-terminus, the 81-residue chain is Large ribosomal subunit protein uL29c (81 aa).

The protein belongs to the universal ribosomal protein uL29 family.

The protein resides in the plastid. Its subcellular location is the chloroplast. The chain is Large ribosomal subunit protein uL29c from Phaeodactylum tricornutum (strain CCAP 1055/1).